The following is a 225-amino-acid chain: Two-component response regulator ARR8 (225 aa).

The 136-residue stretch at 10 to 145 folds into the Response regulatory domain; that stretch reads HVLAVDDSLF…DLTKLKPHMM (136 aa). D78 carries the post-translational modification 4-aspartylphosphate.

It belongs to the ARR family. Type-A subfamily. Post-translationally, two-component system major event consists of a His-to-Asp phosphorelay between a sensor histidine kinase (HK) and a response regulator (RR). In plants, the His-to-Asp phosphorelay involves an additional intermediate named Histidine-containing phosphotransfer protein (HPt). This multistep phosphorelay consists of a His-Asp-His-Asp sequential transfer of a phosphate group between first a His and an Asp of the HK protein, followed by the transfer to a conserved His of the HPt protein and finally the transfer to an Asp in the receiver domain of the RR protein. Predominantly expressed in roots.

The protein resides in the nucleus. Functionally, functions as a response regulator involved in His-to-Asp phosphorelay signal transduction system. Phosphorylation of the Asp residue in the receiver domain activates the ability of the protein to promote the transcription of target genes. Type-A response regulators seem to act as negative regulators of the cytokinin signaling. The sequence is that of Two-component response regulator ARR8 (ARR8) from Arabidopsis thaliana (Mouse-ear cress).